Here is a 621-residue protein sequence, read N- to C-terminus: SH2B adapter protein 2 (621 aa).

Tyr-47 carries the phosphotyrosine modification. Ser-130 is subject to Phosphoserine. A disordered region spans residues 143-166; sequence RRSSPEPDGGATPKAAEPASEPRD. Residues 186–299 enclose the PH domain; the sequence is DIQREGALRF…WVADIQGCVD (114 aa). Position 303 is a phosphoserine (Ser-303). In terms of domain architecture, SH2 spans 409 to 507; it reads WFHGTLSRVK…SADITLRSYV (99 aa). Disordered stretches follow at residues 507–528 and 549–611; these read VRAQ…PVPA and PASP…LGRA. Residues 552-571 are compositionally biased toward low complexity; it reads PSNGAGASSSSGSSSSATSL. The residue at position 597 (Ser-597) is a Phosphoserine. Tyr-618 is subject to Phosphotyrosine.

The protein belongs to the SH2B adapter family. In terms of assembly, homodimer. Interacts with KIT/c-KIT, SHC1, EPOR, PDGFR, VAV1 and VAV3. Interacts (via N-terminal region) with SHC1. Interacts (via the phosphorylated C-terminus) with GRB2. Interacts (via its SH2 domain) with EPOR, INSR and KIT. Interacts with GRB2 after B-cell antigen receptor stimulation. Interacts (via PH domain) with VAV3. Interacts with NTRK1, NTRK2 and NTRK3 (phosphorylated); after stimulation of the receptor by its extracellular ligand and subsequent autophosphorylation of the receptor. Binds INSR, GRB2, ASB6 and CAP. Insulin stimulation leads to dissociation of CAP. Binds CBS only when SH2B2/APS has become phosphorylated. INSR binding does not depend on the phosphorylation of SH2B2/APS. Tyrosine phosphorylated by JAK2, KIT and other kinases activated by B-cell receptor in response to stimulation with cytokines, IL3, IL5, PDGF, IGF1, IGF2, CSF2/GM-CSF and cross-linking of the B-cell receptor complex. In terms of tissue distribution, strongly expressed in brain; also expressed in spleen, kidney and skeletal muscle, and at low levels in small intestine and bone marrow. Strongly expressed in B-cell lines, but not T-cell lines. Also expressed in myeloid and fibroblast cell lines.

The protein localises to the cytoplasm. Its subcellular location is the cell membrane. Functionally, adapter protein for several members of the tyrosine kinase receptor family. Involved in multiple signaling pathways. May be involved in coupling from immunoreceptor to Ras signaling. Acts as a negative regulator of cytokine signaling in collaboration with CBL. Binds to EPOR and suppresses EPO-induced STAT5 activation, possibly through a masking effect on STAT5 docking sites in EPOR. Suppresses PDGF-induced mitogenesis. May induce cytoskeletal reorganization via interaction with VAV3. The chain is SH2B adapter protein 2 (Sh2b2) from Mus musculus (Mouse).